Here is a 187-residue protein sequence, read N- to C-terminus: UPF0301 protein CT0663 (187 aa).

The protein belongs to the UPF0301 (AlgH) family.

The sequence is that of UPF0301 protein CT0663 from Chlorobaculum tepidum (strain ATCC 49652 / DSM 12025 / NBRC 103806 / TLS) (Chlorobium tepidum).